The following is a 145-amino-acid chain: Ecdysteroid-regulated 16 kDa protein (145 aa).

Positions 1–16 are cleaved as a signal peptide; that stretch reads MLFYITVTVLLVSAQA. Intrachain disulfides connect Cys-22–Cys-137 and Cys-90–Cys-97. A glycan (N-linked (GlcNAc...) asparagine) is linked at Asn-51.

The protein belongs to the NPC2 family.

It localises to the secreted. This is Ecdysteroid-regulated 16 kDa protein (ESR16) from Manduca sexta (Tobacco hawkmoth).